A 165-amino-acid polypeptide reads, in one-letter code: Peptide methionine sulfoxide reductase MsrA (165 aa).

The active site involves cysteine 11.

The protein belongs to the MsrA Met sulfoxide reductase family.

The catalysed reaction is L-methionyl-[protein] + [thioredoxin]-disulfide + H2O = L-methionyl-(S)-S-oxide-[protein] + [thioredoxin]-dithiol. The enzyme catalyses [thioredoxin]-disulfide + L-methionine + H2O = L-methionine (S)-S-oxide + [thioredoxin]-dithiol. Has an important function as a repair enzyme for proteins that have been inactivated by oxidation. Catalyzes the reversible oxidation-reduction of methionine sulfoxide in proteins to methionine. In Ureaplasma parvum serovar 3 (strain ATCC 27815 / 27 / NCTC 11736), this protein is Peptide methionine sulfoxide reductase MsrA.